Here is a 184-residue protein sequence, read N- to C-terminus: Mitochondrial import inner membrane translocase subunit TIM22 (184 aa).

Residues 1–26 (MSLWGVYTGPQPPKKPLQEMTQEEQA) are disordered. Disulfide bonds link C40/C118 and C137/C156. The next 2 helical transmembrane spans lie at 45 to 65 (VMAGVSGFALGGFFGLFMASM) and 151 to 171 (AALVGCAGFAAFSLAIDMYLN).

Belongs to the Tim17/Tim22/Tim23 family. As to quaternary structure, component of the TIM22 complex, whose core is composed of TIM22 and TIM54, associated with the 70 kDa heterohexamer composed of TIM9 and TIM10 (or TIM8 and TIM13).

The protein resides in the mitochondrion inner membrane. Essential core component of the TIM22 complex, a complex that mediates the import and insertion of multi-pass transmembrane proteins into the mitochondrial inner membrane. In the TIM22 complex, it constitutes the voltage-activated and signal-gated channel. Forms a twin-pore translocase that uses the membrane potential as external driving force in 2 voltage-dependent steps. In Candida albicans (strain SC5314 / ATCC MYA-2876) (Yeast), this protein is Mitochondrial import inner membrane translocase subunit TIM22.